We begin with the raw amino-acid sequence, 130 residues long: Histone H2A type 1-F (130 aa).

The tract at residues 1-22 is disordered; the sequence is MSGRGKQGGKARAKAKTRSSRA. Residue S2 is modified to Phosphoserine; by RPS6KA5. Citrulline; alternate is present on R4. R4 carries the symmetric dimethylarginine; by PRMT5; alternate modification. 2 positions are modified to N6-(2-hydroxyisobutyryl)lysine: K6 and K10. Residues 7-19 are compositionally biased toward basic residues; sequence QGGKARAKAKTRS. K10 bears the N6-lactoyllysine; alternate mark. K37 is subject to N6-(2-hydroxyisobutyryl)lysine; alternate. An N6-(beta-hydroxybutyryl)lysine; alternate modification is found at K37. K37 carries the post-translational modification N6-crotonyllysine; alternate. N6-(2-hydroxyisobutyryl)lysine occurs at positions 75, 76, and 96. N6-glutaryllysine; alternate is present on K96. Q105 bears the N5-methylglutamine mark. Position 119 is an N6-(2-hydroxyisobutyryl)lysine; alternate (K119). An N6-crotonyllysine; alternate mark is found at K119 and K120. K119 and K120 each carry N6-glutaryllysine; alternate. A Glycyl lysine isopeptide (Lys-Gly) (interchain with G-Cter in ubiquitin); alternate cross-link involves residue K120. Position 121 is a phosphothreonine; by DCAF1 (T121). The residue at position 126 (K126) is an N6-crotonyllysine; alternate. N6-glutaryllysine; alternate is present on K126.

Belongs to the histone H2A family. The nucleosome is a histone octamer containing two molecules each of H2A, H2B, H3 and H4 assembled in one H3-H4 heterotetramer and two H2A-H2B heterodimers. The octamer wraps approximately 147 bp of DNA. Deiminated on Arg-4 in granulocytes upon calcium entry. Post-translationally, monoubiquitination of Lys-120 (H2AK119Ub) by RING1, TRIM37 and RNF2/RING2 complex gives a specific tag for epigenetic transcriptional repression and participates in X chromosome inactivation of female mammals. It is involved in the initiation of both imprinted and random X inactivation. Ubiquitinated H2A is enriched in inactive X chromosome chromatin. Ubiquitination of H2A functions downstream of methylation of 'Lys-27' of histone H3 (H3K27me). H2AK119Ub by RNF2/RING2 can also be induced by ultraviolet and may be involved in DNA repair. Following DNA double-strand breaks (DSBs), it is ubiquitinated through 'Lys-63' linkage of ubiquitin moieties by the E2 ligase UBE2N and the E3 ligases RNF8 and RNF168, leading to the recruitment of repair proteins to sites of DNA damage. Ubiquitination at Lys-14 and Lys-16 (H2AK13Ub and H2AK15Ub, respectively) in response to DNA damage is initiated by RNF168 that mediates monoubiquitination at these 2 sites, and 'Lys-63'-linked ubiquitin are then conjugated to monoubiquitin; RNF8 is able to extend 'Lys-63'-linked ubiquitin chains in vitro. H2AK119Ub and ionizing radiation-induced 'Lys-63'-linked ubiquitination (H2AK13Ub and H2AK15Ub) are distinct events. In terms of processing, phosphorylation on Ser-2 (H2AS1ph) is enhanced during mitosis. Phosphorylation on Ser-2 by RPS6KA5/MSK1 directly represses transcription. Acetylation of H3 inhibits Ser-2 phosphorylation by RPS6KA5/MSK1. Phosphorylation at Thr-121 (H2AT120ph) by DCAF1 is present in the regulatory region of many tumor suppresor genes and down-regulates their transcription. Symmetric dimethylation on Arg-4 by the PRDM1/PRMT5 complex may play a crucial role in the germ-cell lineage. Post-translationally, glutamine methylation at Gln-105 (H2AQ104me) by FBL is specifically dedicated to polymerase I. It is present at 35S ribosomal DNA locus and impairs binding of the FACT complex. In terms of processing, crotonylation (Kcr) is specifically present in male germ cells and marks testis-specific genes in post-meiotic cells, including X-linked genes that escape sex chromosome inactivation in haploid cells. Crotonylation marks active promoters and enhancers and confers resistance to transcriptional repressors. It is also associated with post-meiotically activated genes on autosomes. Lactylated in macrophages by EP300/P300 by using lactoyl-CoA directly derived from endogenous or exogenous lactate, leading to stimulates gene transcription.

The protein localises to the nucleus. Its subcellular location is the chromosome. Functionally, core component of nucleosome. Nucleosomes wrap and compact DNA into chromatin, limiting DNA accessibility to the cellular machineries which require DNA as a template. Histones thereby play a central role in transcription regulation, DNA repair, DNA replication and chromosomal stability. DNA accessibility is regulated via a complex set of post-translational modifications of histones, also called histone code, and nucleosome remodeling. The sequence is that of Histone H2A type 1-F from Rattus norvegicus (Rat).